Reading from the N-terminus, the 111-residue chain is Cyclin-dependent protein kinase inhibitor SMR2 (111 aa).

Residues 1-66 (MSKLLETLEE…PPPRKRPREI (66 aa)) form a disordered region. Basic and acidic residues predominate over residues 10 to 35 (EEKTVEQKPRSQEEEDHQDSSKKEEL).

Interacts with CYCD2-1. Interacts with CDKB1-1. As to expression, expressed at low levels in roots and stems. Expressed in the root vascular tissue.

The protein localises to the nucleus. In terms of biological role, cyclin-dependent protein kinase (CDK) inhibitor that restricts cell proliferation and cooperates with SIM and SMR1 to promote endoreplication during leaf development. This chain is Cyclin-dependent protein kinase inhibitor SMR2, found in Arabidopsis thaliana (Mouse-ear cress).